The following is a 117-amino-acid chain: MKGQKYYSDYHVWIEPIHSRIVKLGLSSQMREHLGNILHIDLPSVGSFIKEGEELCILESSKSAIEVLSPVSGEVLEVNTALEDDILPVNNATESEGWFVVLQLTEDFRSESFSLEP.

A Lipoyl-binding domain is found at 21–103 (IVKLGLSSQM…ESEGWFVVLQ (83 aa)). At Lys-62 the chain carries N6-lipoyllysine.

The protein belongs to the GcvH family. Requires (R)-lipoate as cofactor.

This Chlamydia trachomatis serovar L2 (strain ATCC VR-902B / DSM 19102 / 434/Bu) protein is Glycine cleavage system H-like protein.